We begin with the raw amino-acid sequence, 23 residues long: Magainin-R2 (23 aa).

Expressed by the skin glands.

It is found in the secreted. In terms of biological role, antimicrobial peptide. In Xenopus ruwenzoriensis (Uganda clawed frog), this protein is Magainin-R2.